The primary structure comprises 210 residues: Putative O-methyltransferase MSMEG_5073/MSMEI_4947 (210 aa).

S-adenosyl-L-methionine is bound by residues valine 37, glutamate 59, 61–62 (GT), serine 67, aspartate 85, and valine 86. Residue aspartate 133 coordinates substrate. S-adenosyl-L-methionine is bound at residue aspartate 135.

This sequence belongs to the class I-like SAM-binding methyltransferase superfamily. Cation-dependent O-methyltransferase family.

The polypeptide is Putative O-methyltransferase MSMEG_5073/MSMEI_4947 (Mycolicibacterium smegmatis (strain ATCC 700084 / mc(2)155) (Mycobacterium smegmatis)).